The following is a 296-amino-acid chain: Low affinity immunoglobulin gamma Fc region receptor II (296 aa).

A signal peptide spans 1–42 (MGIPSFLAFPAARRNRAHCTPWHPWGHMLLWTALLFLAPVSG). The Extracellular portion of the chain corresponds to 43–225 (KPDLPKAVVT…SSSSGPSSMT (183 aa)). 2 consecutive Ig-like C2-type domains span residues 47–129 (PKAV…DVIS) and 130–212 (DWLL…VNIT). Cystine bridges form between C70/C112 and C151/C195. N-linked (GlcNAc...) asparagine glycans are attached at residues N79, N86, N105, N179, N186, and N210. The chain crosses the membrane as a helical span at residues 226 to 246 (AVAIGTCFAAVAIVAAIITWF). Topologically, residues 247-296 (RLRRKPISAGLTDAENDAARTEAENTVTYSLLSHPDVAEEDSESDYQKRL) are cytoplasmic. Positions 273–278 (VTYSLL) match the ITIM motif motif. Position 275 is a phosphotyrosine; by SRC-type Tyr-kinases (Y275). The residue at position 288 (S288) is a Phosphoserine. Y292 bears the Phosphotyrosine mark.

In terms of assembly, interacts with FGR and LYN. Phosphorylated by SRC-type Tyr-kinases such as LYN, BLK, FYN and SYK. As to expression, higher expression is found in macrophages than in neutrophils.

The protein localises to the cell membrane. In terms of biological role, binds to the Fc region of immunoglobulins gamma. Low affinity receptor. In Bos taurus (Bovine), this protein is Low affinity immunoglobulin gamma Fc region receptor II (FCGR2).